Reading from the N-terminus, the 218-residue chain is Major NAD(P)H-flavin oxidoreductase (218 aa).

Residues 12-16 (RYTSK) and asparagine 73 each bind FMN. An NAD(+)-binding site is contributed by 154-159 (LARLNI). FMN is bound by residues 165–166 (EG) and 206–208 (KSR).

This sequence belongs to the nitroreductase family. As to quaternary structure, homodimer. The cofactor is FMN.

Its function is as follows. Involved in bioluminescence. It is a good supplier of reduced flavin mononucleotide (FMNH2) to the bioluminescence reaction. Major FMN reductase. It is capable of using both NADH and NADPH as electron donors. As electron acceptor, FMN is the most effective, FAD is considerably effective, and riboflavin is the least effective. The chain is Major NAD(P)H-flavin oxidoreductase from Aliivibrio fischeri (Vibrio fischeri).